Here is a 1222-residue protein sequence, read N- to C-terminus: MLFNINEKGEPLVISFAPFLSPEAIKHLQENERYSDQSQKRTAQQIEAIYTSGQNILVSASAGSGKTFVMVERILDKILRGVSIDRLFISTFTVKAATELRERIENKLYSQIAQTTDFQMKVYLTEQLQSLCQADIGTMDAFAQKVVSRYGYSIGISSQFRIMQDKAEQDVLKQEVFSKLFSEFMNQKEAPAFRALVKNFSGNCKDTSAFRELVYTCYSFSQSTENPKIWLQENFLSAAKTYQRLEDIPDHDIELLLLAMQDTANQLRDVTDMEDYGQLTKAGSRSAKYTKHLTIIEKLSDWVRDFKCLYGKAGLDRLIRDVTDLIPSGNDVTVSKVKYPVFKTLHQKLKQFRHLETILMYQKDCFPLLEQLQDFVFAFSEAYLAVKIQESAFEFSDIAHFAIKILEENTDIRQSYQQHYHEVMVDEYQDNNHMQERLLTLLSNGHNRFMVGDIKQSIYRFRQADPQIFNQKFRDYQKKPEQGKVILLKENFRSQSEVLNVSNAVFSHLMDESVGDVLYDEQHQLIAGSHAQTVPYLDRRAQLLLYNSDKDDGNAPSDSEGISFSEVTIVAKEIIKLHNDKGVPFEDITLLVSSRTRNDIISHTFNQYGIPIVTDGGQQNYLKSVEVMVMLDTLRTINNPRNDYALVALLRSPMFAFDEDDLARIALQKDNELDKDCLYDKMQRAVIGRGAHPELIHDTLLGKLNVFLKTLKSWRRYAKLGSLYDLIWKIFNDRFYFDFVASQAKAEQAQANLYALALRANQFEKSGYKGLYRFIKMIDKVLETQNDLADVEVAAPKQAVNLMTIHKSKGLQFPYVFILNCDKRFSMTDIHKSFILNRQHGIGIKYLADIKGLLGETTLNSVKVSMETLPYQLNKQELRLATLSEQMRLLYVAMTRAEKKVYFIGKASKSKSQEITDPKKLGKLLPLALREQLLTFQDWLLAIADIFSTEDLYFDVRFIEDSDLTQESVGRLQTPQLLNPDDLKDNRQSETIARALDMLEAVSQLNANYEAAIHLPTVRTPSQLKAAYEPLLEPIGVDIIEKSSRSLSDFTLPHFSKKAKVEASHIGSALHQLMQVLPLSKPINQQTLLDALRGIDSNEEVKTALDLKKIESFFCDTSLGQFFQTYQKHLYREAPFAILKVDPISQEEYVLRGIIDAYFLFDDHIVLVDYKTDKYKQPIELKKRYQQQLELYAEALTQTYKLPVTKRYLVLMGGGKPEIVEV.

The 457-residue stretch at 39 to 495 folds into the UvrD-like helicase ATP-binding domain; sequence QKRTAQQIEA…ILLKENFRSQ (457 aa). Residue 60-67 participates in ATP binding; it reads ASAGSGKT. The UvrD-like helicase C-terminal domain occupies 524-810; it reads QLIAGSHAQT…NLMTIHKSKG (287 aa).

It belongs to the helicase family. AddA subfamily. Heterodimer of AddA and AddB/RexB. Mg(2+) is required as a cofactor.

It catalyses the reaction Couples ATP hydrolysis with the unwinding of duplex DNA by translocating in the 3'-5' direction.. The catalysed reaction is ATP + H2O = ADP + phosphate + H(+). Its function is as follows. The heterodimer acts as both an ATP-dependent DNA helicase and an ATP-dependent, dual-direction single-stranded exonuclease. Recognizes the chi site generating a DNA molecule suitable for the initiation of homologous recombination. The AddA nuclease domain is required for chi fragment generation; this subunit has the helicase and 3' -&gt; 5' nuclease activities. This Streptococcus pyogenes serotype M3 (strain ATCC BAA-595 / MGAS315) protein is ATP-dependent helicase/nuclease subunit A.